The chain runs to 374 residues: Flap endonuclease 1 (374 aa).

Residues 1–105 form an N-domain region; it reads MGVKGLNQLI…GELEKRMIRK (105 aa). Asp34 lines the Mg(2+) pocket. 2 residues coordinate DNA: Arg47 and Arg71. Asp87, Glu159, Glu161, Asp180, and Asp182 together coordinate Mg(2+). The I-domain stretch occupies residues 123-254; that stretch reads EMVRYEKRSV…VTAFKLIKEH (132 aa). Residue Glu159 coordinates DNA. DNA-binding residues include Gly232 and Asp234. Mg(2+) is bound at residue Asp234. The interval 341–349 is interaction with PCNA; sequence VQGRLDGFF. Positions 354-365 are enriched in basic and acidic residues; sequence TEKRKPEQDKKT. A disordered region spans residues 354–374; the sequence is TEKRKPEQDKKTKGSKKAKKK.

The protein belongs to the XPG/RAD2 endonuclease family. FEN1 subfamily. Interacts with PCNA. Three molecules of FEN1 bind to one PCNA trimer with each molecule binding to one PCNA monomer. PCNA stimulates the nuclease activity without altering cleavage specificity. It depends on Mg(2+) as a cofactor. In terms of processing, phosphorylated. Phosphorylation upon DNA damage induces relocalization to the nuclear plasma.

The protein localises to the nucleus. The protein resides in the nucleolus. It is found in the nucleoplasm. Its subcellular location is the mitochondrion. Its function is as follows. Structure-specific nuclease with 5'-flap endonuclease and 5'-3' exonuclease activities involved in DNA replication and repair. During DNA replication, cleaves the 5'-overhanging flap structure that is generated by displacement synthesis when DNA polymerase encounters the 5'-end of a downstream Okazaki fragment. It enters the flap from the 5'-end and then tracks to cleave the flap base, leaving a nick for ligation. Also involved in the long patch base excision repair (LP-BER) pathway, by cleaving within the apurinic/apyrimidinic (AP) site-terminated flap. Acts as a genome stabilization factor that prevents flaps from equilibrating into structures that lead to duplications and deletions. Also possesses 5'-3' exonuclease activity on nicked or gapped double-stranded DNA, and exhibits RNase H activity. Also involved in replication and repair of rDNA and in repairing mitochondrial DNA. This is Flap endonuclease 1 from Meyerozyma guilliermondii (strain ATCC 6260 / CBS 566 / DSM 6381 / JCM 1539 / NBRC 10279 / NRRL Y-324) (Yeast).